The chain runs to 537 residues: MNRTQLLTLIATGLGLFMIFLDALIVNVALPDIQRSFAVGEDGLQWVVASYSLGMAVFIMSAATLADLYGRRRWYLIGVSLFTLGSIACGLAPSIAVLTTARGAQGLGAAAVSVTSLALVSAAFPEAKEKARAIGIWTAIASIGTTTGPTLGGLLVDQWGWRSIFYVNLPMGALVLFLTLCYVEESCNERARRFDLSGQLLFIVAVGALVYAVIEGPQIGWTSVQTIVMLWTAAVGCALFVWLERRSSNPMMDLTLFRDTSYALAIATICTVFFAVYGMLLLTTQFLQNVRGYTPSVTGLMILPFSAAVAIVSPLVGHLVGRIGARVPILAGLCMLMLGLLMLIFSEHRSSALVLVGLGLCGSGVALCLTPITTVAMTAVPAERAGMASGIMSAQRAIGSTIGFAVLGSVLAAWLSATLEPHLERAVPDPVQRHVLAEIIIDSANPRAHVGGIVPRRHIEHRDPVAIAEEDFIEGIRVALLVATATLAVVFLAGWRWFPRDVHTAGSDLSERLPTAMTVECAVSHMPGATWCRLWPA.

14 helical membrane passes run 6–26 (LLTLIATGLGLFMIFLDALIV), 46–66 (WVVASYSLGMAVFIMSAATLA), 77–97 (IGVSLFTLGSIACGLAPSIAV), 104–124 (AQGLGAAAVSVTSLALVSAAF), 136–156 (IWTAIASIGTTTGPTLGGLLV), 163–183 (SIFYVNLPMGALVLFLTLCYV), 200–220 (LLFIVAVGALVYAVIEGPQIG), 223–243 (SVQTIVMLWTAAVGCALFVWL), 262–282 (YALAIATICTVFFAVYGMLLL), 300–320 (LMILPFSAAVAIVSPLVGHLV), 327–347 (VPILAGLCMLMLGLLMLIFSE), 352–372 (ALVLVGLGLCGSGVALCLTPI), 397–417 (AIGSTIGFAVLGSVLAAWLSA), and 478–498 (VALLVATATLAVVFLAGWRWF).

It belongs to the major facilitator superfamily. EmrB family.

The protein resides in the cell membrane. The protein is Multidrug resistance protein Stp (stp) of Mycobacterium tuberculosis (strain CDC 1551 / Oshkosh).